Reading from the N-terminus, the 307-residue chain is uncharacterized protein (307 aa).

Residues 54 to 307 form the EAL domain; the sequence is RHYLSTSMRV…KALPVDFFRE (254 aa). 2 consecutive transmembrane segments (helical) span residues 158-178 and 203-223; these read PGFL…AHAL and ALGV…LAYL.

It is found in the cell membrane. This is an uncharacterized protein from Mycobacterium tuberculosis (strain CDC 1551 / Oshkosh).